We begin with the raw amino-acid sequence, 84 residues long: Small ribosomal subunit protein uS17 (84 aa).

The protein belongs to the universal ribosomal protein uS17 family. Part of the 30S ribosomal subunit.

One of the primary rRNA binding proteins, it binds specifically to the 5'-end of 16S ribosomal RNA. In Clostridium beijerinckii (strain ATCC 51743 / NCIMB 8052) (Clostridium acetobutylicum), this protein is Small ribosomal subunit protein uS17.